Consider the following 305-residue polypeptide: UDP-3-O-acyl-N-acetylglucosamine deacetylase (305 aa).

Histidine 79, histidine 238, and aspartate 242 together coordinate Zn(2+). Histidine 265 acts as the Proton donor in catalysis.

Belongs to the LpxC family. It depends on Zn(2+) as a cofactor.

The enzyme catalyses a UDP-3-O-[(3R)-3-hydroxyacyl]-N-acetyl-alpha-D-glucosamine + H2O = a UDP-3-O-[(3R)-3-hydroxyacyl]-alpha-D-glucosamine + acetate. The protein operates within glycolipid biosynthesis; lipid IV(A) biosynthesis; lipid IV(A) from (3R)-3-hydroxytetradecanoyl-[acyl-carrier-protein] and UDP-N-acetyl-alpha-D-glucosamine: step 2/6. In terms of biological role, catalyzes the hydrolysis of UDP-3-O-myristoyl-N-acetylglucosamine to form UDP-3-O-myristoylglucosamine and acetate, the committed step in lipid A biosynthesis. In Colwellia psychrerythraea (strain 34H / ATCC BAA-681) (Vibrio psychroerythus), this protein is UDP-3-O-acyl-N-acetylglucosamine deacetylase.